The primary structure comprises 418 residues: EPS I polysaccharide export inner membrane protein EpsF (418 aa).

10 consecutive transmembrane segments (helical) span residues 21 to 41, 45 to 65, 142 to 162, 170 to 190, 222 to 242, 262 to 282, 296 to 316, 326 to 346, 347 to 367, and 377 to 397; these read VLVV…LPII, CAAI…LATA, PLLV…IAIY, YVVF…GSAI, AGTH…VLFL, LIVL…EFVM, SAWE…AWLL, MAFL…PAVG, ARLF…FFFA, and KTLA…IVSA.

It to S.marcescens SfuB.

The protein localises to the cell inner membrane. Its function is as follows. Probably involved in polymerization and/or export of exopolysaccharide EPS I which functions as a virulence factor. May play a role in export of EPS I or its intermediates across the membranes. The protein is EPS I polysaccharide export inner membrane protein EpsF (epsF) of Ralstonia nicotianae (strain ATCC BAA-1114 / GMI1000) (Ralstonia solanacearum).